Consider the following 2294-residue polypeptide: Protein Ycf2 (2294 aa).

1635 to 1642 (GSIGTGRS) provides a ligand contact to ATP.

This sequence belongs to the Ycf2 family.

The protein resides in the plastid. Its subcellular location is the chloroplast stroma. In terms of biological role, probable ATPase of unknown function. Its presence in a non-photosynthetic plant (Epifagus virginiana) and experiments in tobacco indicate that it has an essential function which is probably not related to photosynthesis. The chain is Protein Ycf2 from Ranunculus macranthus (Large buttercup).